Consider the following 608-residue polypeptide: Glutamine--fructose-6-phosphate aminotransferase [isomerizing] (608 aa).

The active-site Nucleophile; for GATase activity is the Cys-2. A Glutamine amidotransferase type-2 domain is found at 2–217; that stretch reads CGIVGILGRE…DGDWVVLTRN (216 aa). 2 SIS domains span residues 284-423 and 456-598; these read LPFD…ARGE and LARE…VDQP. The active-site For Fru-6P isomerization activity is the Lys-603.

As to quaternary structure, homodimer.

Its subcellular location is the cytoplasm. It catalyses the reaction D-fructose 6-phosphate + L-glutamine = D-glucosamine 6-phosphate + L-glutamate. Its function is as follows. Catalyzes the first step in hexosamine metabolism, converting fructose-6P into glucosamine-6P using glutamine as a nitrogen source. The protein is Glutamine--fructose-6-phosphate aminotransferase [isomerizing] (glmS) of Bradyrhizobium diazoefficiens (strain JCM 10833 / BCRC 13528 / IAM 13628 / NBRC 14792 / USDA 110).